The primary structure comprises 34 residues: Trypsin inhibitor (34 aa).

Intrachain disulfides connect cysteine 7–cysteine 29 and cysteine 11–cysteine 25.

The protein resides in the secreted. Its function is as follows. Inhibits trypsin. In Veronica hederifolia (Ivy-leaved speedwell), this protein is Trypsin inhibitor.